The sequence spans 297 residues: Phosphoribosylaminoimidazole-succinocarboxamide synthase (297 aa).

The protein belongs to the SAICAR synthetase family.

The catalysed reaction is 5-amino-1-(5-phospho-D-ribosyl)imidazole-4-carboxylate + L-aspartate + ATP = (2S)-2-[5-amino-1-(5-phospho-beta-D-ribosyl)imidazole-4-carboxamido]succinate + ADP + phosphate + 2 H(+). It functions in the pathway purine metabolism; IMP biosynthesis via de novo pathway; 5-amino-1-(5-phospho-D-ribosyl)imidazole-4-carboxamide from 5-amino-1-(5-phospho-D-ribosyl)imidazole-4-carboxylate: step 1/2. The polypeptide is Phosphoribosylaminoimidazole-succinocarboxamide synthase (Corynebacterium diphtheriae (strain ATCC 700971 / NCTC 13129 / Biotype gravis)).